Consider the following 95-residue polypeptide: UPF0358 protein BCE_3996 (95 aa).

This sequence belongs to the UPF0358 family.

The chain is UPF0358 protein BCE_3996 from Bacillus cereus (strain ATCC 10987 / NRS 248).